Reading from the N-terminus, the 530-residue chain is MEEELRVRLNDHQVSKVFPVKPKSTAKPVSESETPESRYWSSFKNHSTPNLVSSVAALAFSPVHPHSLAVAHSATVSLFSSQSLSSSRRFSFRDVVSSVCFRSDGALFAACDLSGVVQVFDIKERMALRTLRSHSAPARFVKYPVQDKLHLVSGGDDGVVKYWDVAGATVISDLLGHKDYVRCGDCSPVNDSMLVTGSYDHTVKVWDARVHTSNWIAEINHGLPVEDVVYLPSGGLIATAGGNSVKVWDLIGGGKMVCSMESHNKTVTSLRVARMESAESRLVSVALDGYMKVFDYGRAKVTYSMRFPAPLMSLGLSPDGSTRVIGGSNGMVFAGKKKVRDVVGGQKKSLNLWSLISDVDESRRRALRPTYFRYFQRGQSEKPSKDDYLVKEKKGLKLTRHDKLLKKFRHKEALVSVLEEKKPANVVAVMEELVARRKLMKCVSNMEEGELGMLLGFLQRYCTVQRYSGLLMGLTKKVLETRAEDIKGKNEFKGLLRNLKREVNQEIRIQQSLLEIQGVIAPLMRIAGRS.

WD repeat units follow at residues 50–89 (NLVS…SSRR), 91–130 (SFRD…ALRT), 133–173 (SHSA…VISD), 176–216 (GHKD…SNWI), 220–258 (NHGL…KMVC), 262–304 (SHNK…VTYS), and 320–363 (GSTR…DESR). A Nuclear localization signal motif is present at residues 392–399 (EKKGLKLT).

In terms of tissue distribution, expressed in cells undergoing active cell divisions, including functional megaspores and the female gametophytic cells. Accumulates in roots, stems, leaves, inflorescences and siliques.

The protein localises to the nucleus. The protein resides in the nucleolus. Its function is as follows. Essential protein required for nuclear division and organization during embryo sac development in female gametophyte, probably by promoting rRNA biogenesis essential for the progression of the mitotic division cycles during gametogenesis. Involved in nucleolar processing of pre-18S ribosomal RNA. This chain is Protein SLOW WALKER 1, found in Arabidopsis thaliana (Mouse-ear cress).